Reading from the N-terminus, the 338-residue chain is Anthranilate phosphoribosyltransferase (338 aa).

5-phospho-alpha-D-ribose 1-diphosphate contacts are provided by residues Gly81, 84–85 (GD), Thr89, 91–94 (NIST), 109–117 (KHGNRNLSS), and Ala121. Residue Gly81 coordinates anthranilate. Ser93 is a Mg(2+) binding site. Asn112 is an anthranilate binding site. Arg167 lines the anthranilate pocket. 2 residues coordinate Mg(2+): Asp226 and Glu227.

Belongs to the anthranilate phosphoribosyltransferase family. In terms of assembly, homodimer. Requires Mg(2+) as cofactor.

It catalyses the reaction N-(5-phospho-beta-D-ribosyl)anthranilate + diphosphate = 5-phospho-alpha-D-ribose 1-diphosphate + anthranilate. It participates in amino-acid biosynthesis; L-tryptophan biosynthesis; L-tryptophan from chorismate: step 2/5. Functionally, catalyzes the transfer of the phosphoribosyl group of 5-phosphorylribose-1-pyrophosphate (PRPP) to anthranilate to yield N-(5'-phosphoribosyl)-anthranilate (PRA). This is Anthranilate phosphoribosyltransferase from Cereibacter sphaeroides (strain ATCC 17025 / ATH 2.4.3) (Rhodobacter sphaeroides).